A 137-amino-acid polypeptide reads, in one-letter code: Bombinin-like peptides 1 (137 aa).

Residues 1–18 form the signal peptide; that stretch reads MNFKYIVAVSILIASAYA. Position 70 is an asparagine amide (asparagine 70). A disordered region spans residues 91–112; that stretch reads LDSFEHPEEASEKETRGFNQEE. Isoleucine 118 is subject to D-allo-isoleucine. Isoleucine 136 carries the post-translational modification Isoleucine amide.

It belongs to the bombinin family. As to expression, expressed by the skin glands.

It is found in the secreted. Functionally, has antimicrobial activity, but no hemolytic activity. Preliminary evidence indicates that this peptide does not lyse and thus kill the bacteria by its antimicrobial activity. In terms of biological role, bombinin H has antibacterial and hemolytic activity. The protein is Bombinin-like peptides 1 of Bombina variegata (Yellow-bellied toad).